The chain runs to 878 residues: Enoyl-CoA isomerase/hydratase claC (878 aa).

The segment at 541–561 (VGPASTEATSPVVEPSTMESD) is disordered. Residues 677–681 (AGADL) and Gly-724 each bind substrate.

This sequence belongs to the enoyl-CoA hydratase/isomerase family.

The protein operates within secondary metabolite biosynthesis. Enoyl-CoA isomerase/hydratase; part of the cla gene cluster that produces clavatol and ortho-quinone methide. The clavatol biosynthesis cluster cla and the terrestric acid cluster tra are both involved in the production of peniphenones and penilactones. The non-reducing PKS claF is responsible for the formation of clavatol from successive condensations of 3 malonyl-CoA units, presumably with a simple acetyl-CoA starter unit, and 2 methylation steps. The esterase claE probably collaborates with claF by catalyzing the hydrolysis of ACP-bound acyl intermediates to free the ACP from stalled intermediates. The clavatol oxidase claD then converts clavatol to hydroxyclavatol. Spontaneous dehydration of hydroxyclavatol leads to the accumulation of the highly active ortho-quinone methide. On the other hand, the PKS-NRPS hybrid traA is involved in the formation of crustosic acid, with the help of traB and traD. The polyketide synthase module (PKS) of traA is responsible for the synthesis of the polyketide backbone via the condensation of an acetyl-CoA starter unit with 3 malonyl-CoA units. The downstream nonribosomal peptide synthetase (NRPS) module then amidates the carboxyl end of the polyketide with L-malic acid. Because traA lacks a designated enoylreductase (ER) domain, the required activity is provided the enoyl reductase traG. Crustosic acid undergoes decarboxylation and isomerization to the terrestric acid, catalyzed by the 2-oxoglutarate-dependent dioxygenase traH. Both acids are further converted to the 2 gamma-butyrolactones (R)-5-methyltetronic acid and (S)-5-carboxylmethyltetronic acid, with involvement of the cytochrome P450 monooxygenase claJ. Spontaneous addition of the methide to these gamma-butyrolactones leads to peniphenone D and penilactone D, which undergo again stereospecific attacking by methide to give penilactones A and B. The function of the enoyl-CoA isomerase/hydratase claC has not been investigated yet. This is Enoyl-CoA isomerase/hydratase claC from Penicillium crustosum (Blue mold fungus).